The chain runs to 208 residues: Major capsid protein (208 aa).

Over residues 1–16 (MSTVVVKGNVNGGVQQ) the composition is skewed to low complexity. Positions 1-69 (MSTVVVKGNV…TGVPRGRGSS (69 aa)) are disordered. Composition is skewed to basic residues over residues 17-30 (PRRRRRQSLRRRAN) and 44-61 (PRRRRRRRGGNRRSRRTG).

The protein belongs to the luteoviruses capsid protein family.

The protein resides in the virion. Functionally, major capsid protein that self-assembles to form an icosahedral capsid with a T=3 symmetry, about 23 nm in diameter, and consisting of 180 capsid proteins monomers. Most of the 180 monomers are the major capsid protein, but a small percentage contain the minor capsid protein, which has a long C-terminal extension. The protein is Major capsid protein of Solanum tuberosum (Potato).